The sequence spans 264 residues: Spermidine/putrescine transport system permease protein PotC (264 aa).

Transmembrane regions (helical) follow at residues 10 to 30 (FMTA…VNSF), 66 to 86 (MAVF…VALY), 109 to 129 (IVMA…LGFW), 131 to 151 (LLFS…YSRL), 176 to 196 (IILP…FTLS), and 232 to 252 (ALAT…QLIA). Residues 60–248 (AQHSLTMAVF…VLSLVMVIAS (189 aa)) form the ABC transmembrane type-1 domain.

It belongs to the binding-protein-dependent transport system permease family. CysTW subfamily.

Its subcellular location is the cell inner membrane. Functionally, required for the activity of the bacterial periplasmic transport system of putrescine and spermidine. The polypeptide is Spermidine/putrescine transport system permease protein PotC (potC) (Shigella flexneri).